A 637-amino-acid polypeptide reads, in one-letter code: Chaperone protein DnaK (637 aa).

A Phosphothreonine; by autocatalysis modification is found at T198. The segment at 597–637 (MYAKTSQAGAGPQPGAGPGTGGQGPGKKDEDVVDADFEEVK) is disordered. Residues 608–621 (PQPGAGPGTGGQGP) are compositionally biased toward gly residues. Positions 627-637 (DVVDADFEEVK) are enriched in acidic residues.

Belongs to the heat shock protein 70 family.

Functionally, acts as a chaperone. In Syntrophus aciditrophicus (strain SB), this protein is Chaperone protein DnaK.